A 460-amino-acid chain; its full sequence is Muscarinic acetylcholine receptor M1 (460 aa).

Residues 1-22 lie on the Extracellular side of the membrane; sequence MNTSAPPAVSPNITVLAPGKGP. Asn-2 and Asn-12 each carry an N-linked (GlcNAc...) asparagine glycan. Residues 23–48 form a helical membrane-spanning segment; that stretch reads WQVAFIGITTGLLSLATVTGNLLVLI. Residues 49 to 62 lie on the Cytoplasmic side of the membrane; that stretch reads SFKVNTELKTVNNY. Residues 63–84 traverse the membrane as a helical segment; that stretch reads FLLSLACADLIIGTFSMNLYTT. Over 85–95 the chain is Extracellular; it reads YLLMGHWALGT. The chain crosses the membrane as a helical span at residues 96-121; sequence LACDLWLALDYVASNASVMNLLLISF. An intrachain disulfide couples Cys-98 to Cys-178. Residues 122-142 lie on the Cytoplasmic side of the membrane; that stretch reads DRYFSVTRPLSYRAKRTPRRA. A helical membrane pass occupies residues 143-164; that stretch reads ALMIGLAWLVSFVLWAPAILFW. The Extracellular portion of the chain corresponds to 165–185; that stretch reads QYLVGERTVLAGQCYIQFLSQ. A helical transmembrane segment spans residues 186 to 209; that stretch reads PIITFGTAMAAFYLPVTVMCTLYW. Residues 210-366 lie on the Cytoplasmic side of the membrane; it reads RIYRETENRA…LVKEKKAART (157 aa). Disordered regions lie at residues 225–259, 273–297, and 310–351; these read LQGS…PGRC, SWKE…EEPG, and EAQA…QLAK. Thr-230 is modified (phosphothreonine). The segment covering 238–247 has biased composition (low complexity); that stretch reads SSSSERSQPG. Over residues 328 to 343 the composition is skewed to basic residues; it reads RPTKKGRDRAGKGQKP. A helical transmembrane segment spans residues 367 to 390; that stretch reads LSAILLAFILTWTPYNIMVLVSTF. Topologically, residues 391-401 are extracellular; the sequence is CKDCVPETLWE. Residues 402-420 form a helical membrane-spanning segment; the sequence is LGYWLCYVNSTINPMCYAL. The Cytoplasmic segment spans residues 421–460; sequence CNKAFRDTFRLLLLCRWDKRRWRKIPKRPGSVHRTPSRQC. At Thr-428 the chain carries Phosphothreonine. Ser-451 is subject to Phosphoserine. Thr-455 carries the post-translational modification Phosphothreonine. Residue Ser-457 is modified to Phosphoserine.

It belongs to the G-protein coupled receptor 1 family. Muscarinic acetylcholine receptor subfamily. CHRM1 sub-subfamily. In terms of assembly, interacts with GPRASP2. Interacts with TMEM147.

The protein localises to the cell membrane. Its subcellular location is the postsynaptic cell membrane. Its function is as follows. The muscarinic acetylcholine receptor mediates various cellular responses, including inhibition of adenylate cyclase, breakdown of phosphoinositides and modulation of potassium channels through the action of G proteins. Primary transducing effect is Pi turnover. This chain is Muscarinic acetylcholine receptor M1 (CHRM1), found in Macaca mulatta (Rhesus macaque).